A 293-amino-acid polypeptide reads, in one-letter code: ATP synthase gamma chain (293 aa).

This sequence belongs to the ATPase gamma chain family. F-type ATPases have 2 components, CF(1) - the catalytic core - and CF(0) - the membrane proton channel. CF(1) has five subunits: alpha(3), beta(3), gamma(1), delta(1), epsilon(1). CF(0) has three main subunits: a, b and c.

It is found in the cell inner membrane. Produces ATP from ADP in the presence of a proton gradient across the membrane. The gamma chain is believed to be important in regulating ATPase activity and the flow of protons through the CF(0) complex. This is ATP synthase gamma chain from Nitratidesulfovibrio vulgaris (strain DSM 19637 / Miyazaki F) (Desulfovibrio vulgaris).